The chain runs to 279 residues: Topoisomerase I damage affected protein 4 (279 aa).

At 1 to 32 the chain is on the extracellular side; it reads MNANSTTTAIGLTSPFEKLSFFPHSSNLILAH. The helical transmembrane segment at 33–53 threads the bilayer; sequence LHEIIFSFVFYQLAFSVVAPF. Topologically, residues 54-79 are cytoplasmic; it reads LNKVVFRKHYTTIRDPLLKIDFNVHT. The 202-residue stretch at 70 to 271 folds into the TLC domain; sequence LLKIDFNVHT…MIRIAKKLAK (202 aa). The helical transmembrane segment at 80–100 threads the bilayer; the sequence is VSMIQAVVSNTVLLPTLTTPM. The Extracellular segment spans residues 101–110; sequence HYNVVTYTDS. Residues 111 to 131 traverse the membrane as a helical segment; sequence YSSMVSSLSAGYFIWDLTMCV. Over 132 to 135 the chain is Cytoplasmic; that stretch reads RYFK. Residues 136–156 form a helical membrane-spanning segment; it reads LYGLEFTGHAIGSVYVMLLSL. At 157–162 the chain is on the extracellular side; it reads RPFCQP. Residues 163-183 form a helical membrane-spanning segment; that stretch reads WIGRFLIYEASTPFVNINWFI. Residues 184–192 are Cytoplasmic-facing; sequence MQCNAKSKN. Residues 193–213 form a helical membrane-spanning segment; sequence SIPLWFNVVNGLLLMTVFFVV. Over 214–238 the chain is Extracellular; the sequence is RICWGSIASALLFRQMWKVRDELPK. The helical transmembrane segment at 239–259 threads the bilayer; it reads FSAVTMMSLNIFMNLLNVLWF. Residues 260–279 lie on the Cytoplasmic side of the membrane; that stretch reads KKMIRIAKKLAKPAPTSKLD.

It belongs to the TMEM56 family.

The protein localises to the membrane. In Saccharomyces cerevisiae (strain ATCC 204508 / S288c) (Baker's yeast), this protein is Topoisomerase I damage affected protein 4 (TDA4).